Reading from the N-terminus, the 392-residue chain is MKRVQNLLVAVGLSPNYHRRTYPSGKKSLVVRFYATLTPGLEDVAAKEVESFGCKVEEIRERRGRIFFSGEKSAIPLLNHFSRTLERLNVLLLRCEVEGLDDIYAAVKGLDFSFVKGKSFAIRSLRVGEHDFTSMDIARVAGQAVIDSFMESYGERLKVNLNQPDVIIRVELVDSELFVGVDTTGDDAMHKRWWRVYNHPAHLNAAIACGMLRIADWKVDESLIDPMCGSGTIPIEAALMVRNVPNLRDFAYKKLCEWELAFEPNEVRLKLYGMEKFRKHLVGAIRNAVNAGVADTIEFRQGDATEMTGEYDVIITNPPYGLRIHRKGAIERLYHSFARAAKRCMNQNSRLVIITAEHRVFANAAEEAGLQCTHERFVKYGGLLTKIMVFMI.

The THUMP domain occupies 73-183 (SAIPLLNHFS…DSELFVGVDT (111 aa)). S-adenosyl-L-methionine contacts are provided by residues 199–203 (HPAHL), 230–232 (SGT), Glu-275, 303–304 (DA), and Asn-317.

The protein belongs to the methyltransferase superfamily.

The protein localises to the cytoplasm. It carries out the reaction guanosine(6) in tRNA + S-adenosyl-L-methionine = N(2)-methylguanosine(6) in tRNA + S-adenosyl-L-homocysteine + H(+). S-adenosyl-L-methionine-dependent methyltransferase that catalyzes the methylation of the guanosine nucleotide at position 6 (m2G6) in tRNA. This is tRNA (guanine(6)-N2)-methyltransferase from Archaeoglobus fulgidus (strain ATCC 49558 / DSM 4304 / JCM 9628 / NBRC 100126 / VC-16).